A 341-amino-acid polypeptide reads, in one-letter code: Anthranilate phosphoribosyltransferase (341 aa).

Residues glycine 82, 85–86 (GD), threonine 90, 92–95 (NIST), 110–118 (KHGGRSVSS), and serine 122 each bind 5-phospho-alpha-D-ribose 1-diphosphate. An anthranilate-binding site is contributed by glycine 82. Serine 94 is a binding site for Mg(2+). Arginine 168 is an anthranilate binding site. 2 residues coordinate Mg(2+): aspartate 227 and glutamate 228.

This sequence belongs to the anthranilate phosphoribosyltransferase family. Homodimer. Mg(2+) serves as cofactor.

The enzyme catalyses N-(5-phospho-beta-D-ribosyl)anthranilate + diphosphate = 5-phospho-alpha-D-ribose 1-diphosphate + anthranilate. Its pathway is amino-acid biosynthesis; L-tryptophan biosynthesis; L-tryptophan from chorismate: step 2/5. Its function is as follows. Catalyzes the transfer of the phosphoribosyl group of 5-phosphorylribose-1-pyrophosphate (PRPP) to anthranilate to yield N-(5'-phosphoribosyl)-anthranilate (PRA). The polypeptide is Anthranilate phosphoribosyltransferase (Nitrosomonas eutropha (strain DSM 101675 / C91 / Nm57)).